We begin with the raw amino-acid sequence, 178 residues long: ATP-dependent protease subunit HslV (178 aa).

Threonine 7 is a catalytic residue. The Na(+) site is built by glycine 162, cysteine 165, and threonine 168.

It belongs to the peptidase T1B family. HslV subfamily. A double ring-shaped homohexamer of HslV is capped on each side by a ring-shaped HslU homohexamer. The assembly of the HslU/HslV complex is dependent on binding of ATP.

It localises to the cytoplasm. It catalyses the reaction ATP-dependent cleavage of peptide bonds with broad specificity.. Allosterically activated by HslU binding. In terms of biological role, protease subunit of a proteasome-like degradation complex believed to be a general protein degrading machinery. The sequence is that of ATP-dependent protease subunit HslV from Burkholderia mallei (strain ATCC 23344).